The primary structure comprises 1802 residues: MAAAPTQIEAELYYLIARFLQSGPCNKSAQVLVQELEEHQLIPRRLDWEGKEHRRSFEDLVAANAHIPPDYLLKICERIGPLLDKEIPQSVPGVQTLLGVGRQSLLRDAKDCKSTLWNGSAFAALHRGRPPELPVNYVKPPNVVNITSARQLTGCSRFGHIFPSSAYQHIKMHKRILGHLSSVYCVAFDRSGRRIFTGSDDCLVKIWATDDGRLLATLRGHSAEISDMAVNYENTLIAAGSCDKVVRVWCLRTCAPVAVLQGHSASITSIQFCPSTKGTNRYLTSTGADGTICFWQWHVKTMKFRDRPVKFTERSRPGVQISCSSFSSGGMFITTGSTDHVIRIYYLGSEVPEKIAELESHTDKVVAVQFCNNGDSLRFVSGSRDGTARIWQYQQQEWKSIVLDMATKMTGNNLPSGEDKITKLKVTMVAWDRYDTTVITAVNNFLLKVWNSITGQLLHTLSGHDDEVFVLEAHPFDQRIILSAGHDGNIFIWDLDRGTKIRNYFNMIEGQGHGAVFDCKFSPDGNHFACTDSHGHLLLFGFGCSKYYEKIPDQMFFHTDYRPLIRDANNYVLDEQTQQAPHLMPPPFLVDVDGNPHPTKFQRLVPGRENCKDEQLIPQLGYVANGDGEVVEQVIGQQTNDQDESILDGIIRELQREQDLRLINEGDVPHLPVNRAYSVNGALRSPNMDISSSPNIRLRRHSSQIEGVRQMHNNAPRSQMATERDLMAWSRRVVVNELNNGVSRVQEECRTAKGDIEISLYTVEKKKKPSYTTQRNDYEPSCGRSLRRTQRKRQHTYQTRSNIEHNSQASCQNSGVQEDSDSSSEEDETVGTSDASVEDPVVEWQSESSSSDSSSEYSDWTADAGINLQPPKRQTRQTTRKICSSSDEENLKSLEERQKKPKQTRKKKGGLVSIAGEPNEEWFAPQWILDTIPRRSPFVPQMGDELIYFRQGHEAYVRAVRKSKIYSVNLQKQPWNKMDLREQEFVKIVGIKYEVGPPTLCCLKLAFLDPISGKMTGESFSIKYHDMPDVIDFLVLHQFYNEAKERNWQIGDRFRSIIDDAWWFGTVESQQPFQPEYPDSSFQCYSVHWDNNEREKMSPWDMEPIPEGTAFPDEVGAGVPVSQEELTALLYKPQEGEWGAHSRDEECERVIQGINHLLSLDFASPFAVPVDLSAYPLYCTVVAYPTDLNTIRRRLENRFYRRISALMWEVRYIEHNARTFNEPDSPIVKAAKIVTDVLLRFIGDQSCTDILDTYNKIKAEERNSTDAEEDTEIVDLDSDGPGTSSGRKVKCRGRRQSLKCNPDAWKKQCKELLSLIYEREDSEPFRQPADLLSYPGHQEQEGESSESVVPERQQDSSLSEDYQDVIDTPVDFSTVKETLEAGNYGSPLEFYKDVRQIFNNSKAYTSNKKSRIYSMMLRLSALFESHIKNIISEYKSAIQSQKRRRPRYRKRLRSSSSSLSSSGAPSPKGKQKQMKLQPKNDQNTSVSHARTSSPFSSPVSDAAEGLSLYLLDDEPDGPFSSSSFGGYSRSGNSHDPGKAKSFRNRVLPVKQDHSLDGPLTNGDGREPRTGIKRKLLSASEEDENMGGEDKEKKETKEKSHLSTSESGELGSSLSSESTCGSDSDSESTSRTDQDYVDGDHDYSKFIQTRPKRKLRKQHGNGKRNWKTRGTGGRGRWGRWGRWSRGGRGRGGRGRGSRGRGGGGTRGRGRGRGGRGASRGATRAKRARIADDEFDTMFSGRFSRLPRIKTRNQGRRTVLYNDDSDNDNFVSTEDPLNLGTSRSGRVRKMTEKARVSHLMGWNY.

WD repeat units lie at residues 170-209 (IKMHKRILGHLSSVYCVAFDRSGRRIFTGSDDCLVKIWAT), 213-251 (RLLATLRGHSAEISDMAVNYENTLIAAGSCDKVVRVWCL), 255-297 (APVA…FWQW), 307-347 (RPVK…IYYL), 353-393 (EKIA…IWQY), 400-452 (SIVL…VWNS), 456-495 (QLLHTLSGHDDEVFVLEAHPFDQRIILSAGHDGNIFIWDL), and 502-542 (RNYF…LFGF). A phosphoserine mark is found at Ser693 and Ser703. The segment at 768-910 (KPSYTTQRND…PKQTRKKKGG (143 aa)) is disordered. Over residues 785–795 (SLRRTQRKRQH) the composition is skewed to basic residues. A compositionally biased stretch (polar residues) spans 796-817 (TYQTRSNIEHNSQASCQNSGVQ). Residues 818–829 (EDSDSSSEEDET) show a composition bias toward acidic residues. Over residues 846–859 (SESSSSDSSSEYSD) the composition is skewed to low complexity. A phosphoserine mark is found at Ser885 and Ser886. The span at 889–898 (ENLKSLEERQ) shows a compositional bias: basic and acidic residues. The span at 899–909 (KKPKQTRKKKG) shows a compositional bias: basic residues. In terms of domain architecture, Bromo 1 spans 1138–1245 (WGAHSRDEEC…DVLLRFIGDQ (108 aa)). Disordered regions lie at residues 1262 to 1292 (RNSTDAEEDTEIVDLDSDGPGTSSGRKVKCR), 1326 to 1361 (RQPADLLSYPGHQEQEGESSESVVPERQQDSSLSED), 1438 to 1500 (IQSQ…SPVS), and 1520 to 1725 (SSSS…RAKR). Over residues 1266–1278 (DAEEDTEIVDLDS) the composition is skewed to acidic residues. In terms of domain architecture, Bromo 2 spans 1300–1430 (CNPDAWKKQC…ALFESHIKNI (131 aa)). Basic residues predominate over residues 1441-1453 (QKRRRPRYRKRLR). The segment covering 1454–1468 (SSSSSLSSSGAPSPK) has biased composition (low complexity). Over residues 1479–1499 (KNDQNTSVSHARTSSPFSSPV) the composition is skewed to polar residues. Over residues 1520 to 1533 (SSSSFGGYSRSGNS) the composition is skewed to low complexity. Residues Ser1577 and Ser1579 each carry the phosphoserine modification. Basic and acidic residues predominate over residues 1587-1600 (GEDKEKKETKEKSH). A compositionally biased stretch (low complexity) spans 1601 to 1626 (LSTSESGELGSSLSSESTCGSDSDSE). Positions 1627–1643 (STSRTDQDYVDGDHDYS) are enriched in basic and acidic residues. Composition is skewed to basic residues over residues 1649-1666 (RPKRKLRKQHGNGKRNWK) and 1684-1697 (RGGRGRGGRGRGSR). Phosphoserine is present on Ser1763.

In terms of tissue distribution, found in most adult tissues. Down-regulated in a majority of the B-CLL cases examined.

Functionally, plays a role in the regulation of cell morphology and cytoskeletal organization. Required in the control of cell shape. This is Bromodomain and WD repeat-containing protein 3 (BRWD3) from Homo sapiens (Human).